The primary structure comprises 309 residues: Cytochrome c biogenesis protein CcsA (309 aa).

The next 8 helical transmembrane spans lie at 18–38, 48–68, 73–93, 102–122, 148–168, 216–236, 250–267, and 279–299; these read LGLL…GAVF, LITI…WSIS, ISNL…GQLL, IIPS…CFVL, VMLS…VLFI, SILV…VWAN, TWAF…HMRI, and LAST…FLGI.

This sequence belongs to the CcmF/CycK/Ccl1/NrfE/CcsA family. As to quaternary structure, may interact with ccs1.

Its subcellular location is the cellular thylakoid membrane. Its function is as follows. Required during biogenesis of c-type cytochromes (cytochrome c6 and cytochrome f) at the step of heme attachment. This Prochlorococcus marinus (strain AS9601) protein is Cytochrome c biogenesis protein CcsA.